The following is a 325-amino-acid chain: Glutarate 2-hydroxylase (325 aa).

Residues His-160, Asp-162, and His-292 each coordinate Fe cation.

Belongs to the glutarate hydroxylase family. In terms of assembly, homotetramer. Fe(2+) is required as a cofactor.

It carries out the reaction glutarate + 2-oxoglutarate + O2 = (S)-2-hydroxyglutarate + succinate + CO2. It functions in the pathway amino-acid degradation. Acts as an alpha-ketoglutarate-dependent dioxygenase catalyzing hydroxylation of glutarate (GA) to L-2-hydroxyglutarate (L2HG). Functions in a L-lysine degradation pathway that proceeds via cadaverine, glutarate and L-2-hydroxyglutarate. The chain is Glutarate 2-hydroxylase from Escherichia coli (strain K12 / MC4100 / BW2952).